The sequence spans 149 residues: MADQLTDEQISEFKEAFSLFDKDGDGCITTKELGTVMRSLGQNPTEAELQDMINEVDADGNGTIDFPEFLNLMAKKMKDTDSEEELKEAFRVFDKDQNGFISAAELRHVMTNLGEKLTDEEVEEMIREADVDGDGQINYEEFVKIMMAK.

EF-hand domains are found at residues 8–43, 44–79, 81–116, and 117–149; these read EQIS…LGQN, PTEA…KMKD, DSEE…LGEK, and LTDE…MMAK. Ca(2+)-binding residues include Asp-21, Asp-23, Asp-25, Cys-27, Glu-32, Asp-57, Asp-59, Asn-61, Thr-63, Glu-68, Asp-94, Asp-96, Asn-98, Glu-105, Asp-130, Asp-132, Asp-134, Gln-136, and Glu-141.

It belongs to the calmodulin family. As to quaternary structure, interacts with ZAR1 (via CaMBD domain). Binds to IQD1. Binds to MEE62 in a calcium-dependent manner.

It is found in the cytoplasm. Its subcellular location is the cell membrane. Functionally, calmodulin mediates the control of a large number of enzymes, ion channels and other proteins by Ca(2+). Among the enzymes to be stimulated by the calmodulin-Ca(2+) complex are a number of protein kinases and phosphatases. This chain is Calmodulin-1 (CAM1), found in Arabidopsis thaliana (Mouse-ear cress).